Reading from the N-terminus, the 179-residue chain is Large ribosomal subunit protein uL5 (179 aa).

Belongs to the universal ribosomal protein uL5 family. Part of the 50S ribosomal subunit; part of the 5S rRNA/L5/L18/L25 subcomplex. Contacts the 5S rRNA and the P site tRNA. Forms a bridge to the 30S subunit in the 70S ribosome.

This is one of the proteins that bind and probably mediate the attachment of the 5S RNA into the large ribosomal subunit, where it forms part of the central protuberance. In the 70S ribosome it contacts protein S13 of the 30S subunit (bridge B1b), connecting the 2 subunits; this bridge is implicated in subunit movement. Contacts the P site tRNA; the 5S rRNA and some of its associated proteins might help stabilize positioning of ribosome-bound tRNAs. The protein is Large ribosomal subunit protein uL5 of Glaesserella parasuis serovar 5 (strain SH0165) (Haemophilus parasuis).